Reading from the N-terminus, the 603-residue chain is UvrABC system protein C (603 aa).

Residues 15–92 form the GIY-YIG domain; it reads DQPGCYLMKD…IKKHDPRFNI (78 aa). Positions 197–232 constitute a UVR domain; sequence KTVKNDLMKKMQEAAENMEFEKAGEFRDQINAIETT.

It belongs to the UvrC family. As to quaternary structure, interacts with UvrB in an incision complex.

It is found in the cytoplasm. The UvrABC repair system catalyzes the recognition and processing of DNA lesions. UvrC both incises the 5' and 3' sides of the lesion. The N-terminal half is responsible for the 3' incision and the C-terminal half is responsible for the 5' incision. The polypeptide is UvrABC system protein C (Listeria monocytogenes serotype 4b (strain CLIP80459)).